Consider the following 74-residue polypeptide: UPF0291 protein lmo0496 (74 aa).

The protein belongs to the UPF0291 family.

Its subcellular location is the cytoplasm. The polypeptide is UPF0291 protein lmo0496 (Listeria monocytogenes serovar 1/2a (strain ATCC BAA-679 / EGD-e)).